A 344-amino-acid chain; its full sequence is Heat-inducible transcription repressor HrcA (344 aa).

It belongs to the HrcA family.

Its function is as follows. Negative regulator of class I heat shock genes (grpE-dnaK-dnaJ and groELS operons). Prevents heat-shock induction of these operons. This Streptococcus mutans serotype c (strain ATCC 700610 / UA159) protein is Heat-inducible transcription repressor HrcA.